Consider the following 619-residue polypeptide: Dihydroxy-acid dehydratase 1 (619 aa).

Residue Asp81 coordinates Mg(2+). Residue Cys122 participates in [2Fe-2S] cluster binding. Residues Asp123 and Lys124 each contribute to the Mg(2+) site. At Lys124 the chain carries N6-carboxylysine. Cys198 provides a ligand contact to [2Fe-2S] cluster. A Mg(2+)-binding site is contributed by Glu494. Catalysis depends on Ser520, which acts as the Proton acceptor.

Belongs to the IlvD/Edd family. Homodimer. [2Fe-2S] cluster serves as cofactor. It depends on Mg(2+) as a cofactor.

The enzyme catalyses (2R)-2,3-dihydroxy-3-methylbutanoate = 3-methyl-2-oxobutanoate + H2O. The catalysed reaction is (2R,3R)-2,3-dihydroxy-3-methylpentanoate = (S)-3-methyl-2-oxopentanoate + H2O. The protein operates within amino-acid biosynthesis; L-isoleucine biosynthesis; L-isoleucine from 2-oxobutanoate: step 3/4. Its pathway is amino-acid biosynthesis; L-valine biosynthesis; L-valine from pyruvate: step 3/4. In terms of biological role, functions in the biosynthesis of branched-chain amino acids. Catalyzes the dehydration of (2R,3R)-2,3-dihydroxy-3-methylpentanoate (2,3-dihydroxy-3-methylvalerate) into 2-oxo-3-methylpentanoate (2-oxo-3-methylvalerate) and of (2R)-2,3-dihydroxy-3-methylbutanoate (2,3-dihydroxyisovalerate) into 2-oxo-3-methylbutanoate (2-oxoisovalerate), the penultimate precursor to L-isoleucine and L-valine, respectively. This is Dihydroxy-acid dehydratase 1 from Bordetella bronchiseptica (strain ATCC BAA-588 / NCTC 13252 / RB50) (Alcaligenes bronchisepticus).